The following is a 238-amino-acid chain: DNA repair protein RAD59 (238 aa).

The protein belongs to the RAD52 family. Interacts with RAD51 and RAD52.

The protein resides in the nucleus. Functionally, involved in the repair of double-strand breaks in DNA during vegetative growth via recombination and single-strand annealing. Anneals complementary single-stranded DNA. The protein is DNA repair protein RAD59 (RAD59) of Saccharomyces cerevisiae (strain ATCC 204508 / S288c) (Baker's yeast).